A 237-amino-acid polypeptide reads, in one-letter code: UPF0280 protein Mbur_0309 (237 aa).

Belongs to the UPF0280 family.

The protein is UPF0280 protein Mbur_0309 of Methanococcoides burtonii (strain DSM 6242 / NBRC 107633 / OCM 468 / ACE-M).